Consider the following 177-residue polypeptide: Acireductone dioxygenase (177 aa).

A disordered region spans residues 1 to 23 (MVRAWYMDDSDADQRAPHMTDPP). Residues His86, His88, Glu92, and His131 each coordinate Fe(2+). His86, His88, Glu92, and His131 together coordinate Ni(2+).

Belongs to the acireductone dioxygenase (ARD) family. The cofactor is Fe(2+). It depends on Ni(2+) as a cofactor.

It is found in the cytoplasm. Its subcellular location is the nucleus. The enzyme catalyses 1,2-dihydroxy-5-(methylsulfanyl)pent-1-en-3-one + O2 = 4-methylsulfanyl-2-oxobutanoate + formate + 2 H(+). The catalysed reaction is 1,2-dihydroxy-5-(methylsulfanyl)pent-1-en-3-one + O2 = 3-(methylsulfanyl)propanoate + CO + formate + 2 H(+). It participates in amino-acid biosynthesis; L-methionine biosynthesis via salvage pathway; L-methionine from S-methyl-5-thio-alpha-D-ribose 1-phosphate: step 5/6. Its function is as follows. Catalyzes 2 different reactions between oxygen and the acireductone 1,2-dihydroxy-3-keto-5-methylthiopentene (DHK-MTPene) depending upon the metal bound in the active site. Fe-containing acireductone dioxygenase (Fe-ARD) produces formate and 2-keto-4-methylthiobutyrate (KMTB), the alpha-ketoacid precursor of methionine in the methionine recycle pathway. Ni-containing acireductone dioxygenase (Ni-ARD) produces methylthiopropionate, carbon monoxide and formate, and does not lie on the methionine recycle pathway. This is Acireductone dioxygenase from Branchiostoma floridae (Florida lancelet).